Consider the following 284-residue polypeptide: 2-dehydro-3-deoxyphosphooctonate aldolase (284 aa).

It belongs to the KdsA family.

The protein localises to the cytoplasm. It catalyses the reaction D-arabinose 5-phosphate + phosphoenolpyruvate + H2O = 3-deoxy-alpha-D-manno-2-octulosonate-8-phosphate + phosphate. It participates in carbohydrate biosynthesis; 3-deoxy-D-manno-octulosonate biosynthesis; 3-deoxy-D-manno-octulosonate from D-ribulose 5-phosphate: step 2/3. It functions in the pathway bacterial outer membrane biogenesis; lipopolysaccharide biosynthesis. The sequence is that of 2-dehydro-3-deoxyphosphooctonate aldolase from Salmonella enteritidis PT4 (strain P125109).